The chain runs to 319 residues: MGAMAPRTLLLLLAAVLAPTQTWAGSHSLRYFHTAVSRPGLGEPRFISVGYVDDTQFVRYDSDAENPRYEPRARWMEREGPEYWEEQTLVAKGQELDYRVSLRNLLSYYNQSEGGSHTIQRMYGCDVGSDGSLLRGYEQHAYDGRDYIALNEDLKTWAVADFAAWITRSKWQRNGAAERSRAYLEGTCVEWLLRYLERGKETLLRSDPPEAHVTLHPRPEGDVTLRCWALGFYPADITLTWQLNGEDLTQDMELVETRPAGDGTFQKWASVVVPLGKEQNYTCRVEHEGLPEPLSQRWEPSPSTDSNLLLLFLELWQFL.

A signal peptide spans 1 to 24 (MGAMAPRTLLLLLAAVLAPTQTWA). Positions 25–114 (GSHSLRYFHT…LLSYYNQSEG (90 aa)) are alpha-1. Residues 25 to 307 (GSHSLRYFHT…WEPSPSTDSN (283 aa)) are Extracellular-facing. An N-linked (GlcNAc...) asparagine glycan is attached at asparagine 110. The interval 115–206 (GSHTIQRMYG…ERGKETLLRS (92 aa)) is alpha-2. Cystine bridges form between cysteine 125–cysteine 188 and cysteine 227–cysteine 283. Positions 207–298 (DPPEAHVTLH…GLPEPLSQRW (92 aa)) are alpha-3. Residues 209–295 (PEAHVTLHPR…EHEGLPEPLS (87 aa)) enclose the Ig-like C1-type domain. N-linked (GlcNAc...) asparagine glycosylation occurs at asparagine 280. The connecting peptide stretch occupies residues 299–307 (EPSPSTDSN). A helical transmembrane segment spans residues 308–319 (LLLLFLELWQFL).

It belongs to the MHC class I family. In terms of assembly, heterodimer of an alpha chain and a beta chain (beta-2-microglobulin).

It localises to the membrane. Involved in the presentation of foreign antigens to the immune system. The protein is Class I histocompatibility antigen, Non-RT1.A alpha-1 chain (RT1-Aw2) of Rattus norvegicus (Rat).